The following is a 351-amino-acid chain: Phosphoribosylformylglycinamidine cyclo-ligase (351 aa).

The protein belongs to the AIR synthase family.

The protein resides in the cytoplasm. The enzyme catalyses 2-formamido-N(1)-(5-O-phospho-beta-D-ribosyl)acetamidine + ATP = 5-amino-1-(5-phospho-beta-D-ribosyl)imidazole + ADP + phosphate + H(+). The protein operates within purine metabolism; IMP biosynthesis via de novo pathway; 5-amino-1-(5-phospho-D-ribosyl)imidazole from N(2)-formyl-N(1)-(5-phospho-D-ribosyl)glycinamide: step 2/2. This chain is Phosphoribosylformylglycinamidine cyclo-ligase, found in Xylella fastidiosa (strain Temecula1 / ATCC 700964).